The primary structure comprises 289 residues: Ferri-bacillibactin esterase BesA (289 aa).

Residues Ser163, Glu225, and His263 each act as charge relay system in the active site.

The protein belongs to the esterase D family.

The protein resides in the cytoplasm. In terms of biological role, catalyzes the hydrolysis of the trilactone cycle of ferri-bacillibactin (ferri-BB) complex, leading to the formation of bacillibactin monomers and to cytosolic iron release, thus making iron available for metabolic use. Can also hydrolyze bacillibactin (BB), however the catalytic efficiency for ferri-BB hydrolysis is much higher than for BB. This is Ferri-bacillibactin esterase BesA (besA) from Bacillus subtilis (strain 168).